Reading from the N-terminus, the 441-residue chain is Bacteria-responsive protein 1 (441 aa).

Positions 1 to 18 (MWFFKVGALLFLAALVSA) are cleaved as a signal peptide. Residue Asn-20 is glycosylated (N-linked (GlcNAc...) asparagine). Residues 25–441 (PKVLCYYDGQ…PILRAAKYRL (417 aa)) enclose the GH18 domain. Cysteines 29 and 56 form a disulfide. N-linked (GlcNAc...) asparagine glycosylation is present at Asn-225.

This sequence belongs to the glycosyl hydrolase 18 family. IDGF subfamily. As to expression, salivary gland (at protein level).

The protein resides in the secreted. Its function is as follows. Promotes recruitment of host neutrophils at the bite site. Induces expression of IL1B and IL6 in the skin of the host. Functionally, (Microbial infection) Enhances Zika virus replication and exacerbates disease pathogenesis in the host. This is Bacteria-responsive protein 1 from Aedes aegypti (Yellowfever mosquito).